Reading from the N-terminus, the 745-residue chain is 5-methyltetrahydropteroyltriglutamate--homocysteine methyltransferase (745 aa).

5-methyltetrahydropteroyltri-L-glutamate contacts are provided by residues 19 to 22 (RELK) and Lys119. Residues 418–420 (IGS) and Glu471 contribute to the L-homocysteine site. L-methionine is bound by residues 418–420 (IGS) and Glu471. Residues 502-503 (RC) and Trp548 each bind 5-methyltetrahydropteroyltri-L-glutamate. Asp586 is an L-homocysteine binding site. Asp586 contributes to the L-methionine binding site. 5-methyltetrahydropteroyltri-L-glutamate is bound at residue Glu592. His628, Cys630, and Glu652 together coordinate Zn(2+). His681 functions as the Proton donor in the catalytic mechanism. Cys713 is a Zn(2+) binding site.

This sequence belongs to the vitamin-B12 independent methionine synthase family. The cofactor is Zn(2+).

It catalyses the reaction 5-methyltetrahydropteroyltri-L-glutamate + L-homocysteine = tetrahydropteroyltri-L-glutamate + L-methionine. The protein operates within amino-acid biosynthesis; L-methionine biosynthesis via de novo pathway; L-methionine from L-homocysteine (MetE route): step 1/1. Functionally, catalyzes the transfer of a methyl group from 5-methyltetrahydrofolate to homocysteine resulting in methionine formation. In Corynebacterium glutamicum (strain ATCC 13032 / DSM 20300 / JCM 1318 / BCRC 11384 / CCUG 27702 / LMG 3730 / NBRC 12168 / NCIMB 10025 / NRRL B-2784 / 534), this protein is 5-methyltetrahydropteroyltriglutamate--homocysteine methyltransferase.